Here is a 188-residue protein sequence, read N- to C-terminus: Transmembrane protein 160 (188 aa).

A mitochondrion-targeting transit peptide spans 1-96 (MGGGWWWARA…ISFMQSDMGR (96 aa)). Positions 24-52 (PPQRPRSGGARGSFAPGHGPRAGASPPPV) are disordered. The residue at position 48 (serine 48) is a Phosphoserine. Helical transmembrane passes span 102 to 122 (FFLL…VGLA) and 135 to 155 (AAVG…AVGL). The disordered stretch occupies residues 168–188 (PEDDGTASAEGPDEAGRPPPE).

It belongs to the TMEM160 family.

Its subcellular location is the mitochondrion inner membrane. In Homo sapiens (Human), this protein is Transmembrane protein 160.